Reading from the N-terminus, the 318-residue chain is Tumor necrosis factor ligand superfamily member 11 (318 aa).

At 1–47 (MRRANRDYGKYLRGSEEMGSCPGVPHEGPLHPAPSAPAPAPPPAASR) the chain is on the cytoplasmic side. The disordered stretch occupies residues 13–41 (RGSEEMGSCPGVPHEGPLHPAPSAPAPAP). The segment covering 31 to 41 (HPAPSAPAPAP) has biased composition (pro residues). A helical; Signal-anchor for type II membrane protein transmembrane segment spans residues 48–68 (FMFLALLGLGLGQVVCSIALF). Over 69–318 (LYFRAQMDPN…FGAFKVQDID (250 aa)) the chain is Extracellular. Residues 165 to 314 (PFAHLTINAA…DATYFGAFKV (150 aa)) form the THD domain. N-linked (GlcNAc...) asparagine glycans are attached at residues N199 and N264.

It belongs to the tumor necrosis factor family. As to quaternary structure, homotrimer. Interacts with TNFRSF11A and TNFRSF11B. Interacts with FBN1 (via N-terminal domain) in a Ca(+2)-dependent manner. Interacts with TNFAIP6 (via both Link and CUB domains). In terms of processing, the soluble form derives from the membrane form by proteolytic processing. As to expression, highly expressed in thymus and bone tissues.

Its subcellular location is the cell membrane. It localises to the secreted. Functionally, cytokine that binds to TNFRSF11B/OPG and to TNFRSF11A/RANK. Osteoclast differentiation and activation factor. Augments the ability of dendritic cells to stimulate naive T-cell proliferation. May be an important regulator of interactions between T-cells and dendritic cells and may play a role in the regulation of the T-cell-dependent immune response. May also play an important role in enhanced bone-resorption in humoral hypercalcemia of malignancy. Induces osteoclastogenesis by activating multiple signaling pathways in osteoclast precursor cells, chief among which is induction of long lasting oscillations in the intracellular concentration of Ca (2+) resulting in the activation of NFATC1, which translocates to the nucleus and induces osteoclast-specific gene transcription to allow differentiation of osteoclasts. During osteoclast differentiation, in a TMEM64 and ATP2A2-dependent manner induces activation of CREB1 and mitochondrial ROS generation necessary for proper osteoclast generation. The sequence is that of Tumor necrosis factor ligand superfamily member 11 (Tnfsf11) from Rattus norvegicus (Rat).